Reading from the N-terminus, the 467-residue chain is Ankyrin repeat and SOCS box protein 10 (467 aa).

ANK repeat units follow at residues 115–144 (ELTT…RPDS), 147–176 (GGRT…DPNI), 180–209 (DGKR…RVDG), 214–243 (EEET…CPDA), 247–289 (EGWT…DADA), 293–322 (DKQR…SANT), and 326–361 (GGHT…AVRV). An SOCS box domain is found at 412–464 (YSSLFALVRQPRSLQHLSRCALRSHLEGSLPQALPRLPLPPRLLRYLQLDFEG).

This sequence belongs to the ankyrin SOCS box (ASB) family. Expressed in the eye. The highest expression is observed in the iris, with moderate levels in the trabecular meshwork (TM), the lamina, and the optic nerve; slightly lower levels in the ciliary body, retina, and choroid; and very low levels in the lens.

It is found in the cytoplasm. Its subcellular location is the nucleus. Its pathway is protein modification; protein ubiquitination. Its function is as follows. May be a substrate-recognition component of a SCF-like ECS (Elongin-Cullin-SOCS-box protein) E3 ubiquitin-protein ligase complex which mediates the ubiquitination and subsequent proteasomal degradation of target proteins. In Homo sapiens (Human), this protein is Ankyrin repeat and SOCS box protein 10 (ASB10).